We begin with the raw amino-acid sequence, 431 residues long: 4-hydroxy-3-methylbut-2-en-1-yl diphosphate synthase (flavodoxin) (431 aa).

The span at 1-12 shows a compositional bias: basic and acidic residues; the sequence is MNKLENPLRDDV. Positions 1–20 are disordered; that stretch reads MNKLENPLRDDVAGPAPRHQ. [4Fe-4S] cluster contacts are provided by Cys-310, Cys-313, Cys-356, and Glu-363.

This sequence belongs to the IspG family. [4Fe-4S] cluster serves as cofactor.

The enzyme catalyses (2E)-4-hydroxy-3-methylbut-2-enyl diphosphate + oxidized [flavodoxin] + H2O + 2 H(+) = 2-C-methyl-D-erythritol 2,4-cyclic diphosphate + reduced [flavodoxin]. The protein operates within isoprenoid biosynthesis; isopentenyl diphosphate biosynthesis via DXP pathway; isopentenyl diphosphate from 1-deoxy-D-xylulose 5-phosphate: step 5/6. Functionally, converts 2C-methyl-D-erythritol 2,4-cyclodiphosphate (ME-2,4cPP) into 1-hydroxy-2-methyl-2-(E)-butenyl 4-diphosphate. The chain is 4-hydroxy-3-methylbut-2-en-1-yl diphosphate synthase (flavodoxin) from Rhodopseudomonas palustris (strain TIE-1).